A 752-amino-acid polypeptide reads, in one-letter code: Polyribonucleotide nucleotidyltransferase (752 aa).

Residues Asp-529 and Asp-535 each contribute to the Mg(2+) site. The region spanning 595-654 (PRVTTIKVPVDKIGEVIGPKGKVINAITEETGAQISIEDDGTVFVGATDGPSAQAAIDKI) is the KH domain. The region spanning 666-735 (GERFLGTVVK…KRGKISLILV (70 aa)) is the S1 motif domain.

It belongs to the polyribonucleotide nucleotidyltransferase family. Requires Mg(2+) as cofactor.

It is found in the cytoplasm. The enzyme catalyses RNA(n+1) + phosphate = RNA(n) + a ribonucleoside 5'-diphosphate. Functionally, involved in mRNA degradation. Catalyzes the phosphorolysis of single-stranded polyribonucleotides processively in the 3'- to 5'-direction. This is Polyribonucleotide nucleotidyltransferase from Mycobacterium tuberculosis (strain ATCC 25177 / H37Ra).